The sequence spans 235 residues: Fms-related tyrosine kinase 3 ligand (235 aa).

Positions 1 to 26 (MTVLAPAWSPTTYLLLLLLLSSGLSG) are cleaved as a signal peptide. Residues 27–184 (TQDCSFQHSP…EATAPTAPQP (158 aa)) are Extracellular-facing. 3 disulfides stabilise this stretch: C30–C111, C70–C153, and C119–C158. N-linked (GlcNAc...) asparagine glycosylation is found at N126 and N149. A helical membrane pass occupies residues 185–205 (PLLLLLLLPVGLLLLAAAWCL). The Cytoplasmic portion of the chain corresponds to 206–235 (HWQRTRRRTPRPGEQVPPVPSPQDLLLVEH). The tract at residues 213–235 (RTPRPGEQVPPVPSPQDLLLVEH) is disordered.

In terms of assembly, homodimer (isoform 2).

The protein localises to the cell membrane. It localises to the secreted. In terms of biological role, stimulates the proliferation of early hematopoietic cells by activating FLT3. Synergizes well with a number of other colony stimulating factors and interleukins. Required for the development of B cells, and dendritic cells (DCs). The protein is Fms-related tyrosine kinase 3 ligand (FLT3LG) of Homo sapiens (Human).